Consider the following 163-residue polypeptide: Late embryogenesis abundant protein Dc3 (163 aa).

Disordered stretches follow at residues Met-1–Met-117 and Phe-139–Glu-163. 3 stretches are compositionally biased toward basic and acidic residues: residues Thr-28–Asp-56, Gly-67–Thr-84, and Thr-91–Thr-113. Tandem repeats lie at residues Lys-32–Glu-42, Met-43–Glu-53, Lys-65–Glu-75, Thr-76–Gly-86, Ala-87–Glu-97, and Lys-103–Gly-115. Residues Lys-32–Gly-115 are 6 X 11 AA approximate repeats. Residues Thr-152–Glu-163 are compositionally biased toward low complexity.

This sequence belongs to the LEA type 4 family.

This Daucus carota (Wild carrot) protein is Late embryogenesis abundant protein Dc3.